Here is a 569-residue protein sequence, read N- to C-terminus: 2-succinyl-5-enolpyruvyl-6-hydroxy-3-cyclohexene-1-carboxylate synthase (569 aa).

This sequence belongs to the TPP enzyme family. MenD subfamily. Homodimer. Mg(2+) serves as cofactor. Requires Mn(2+) as cofactor. The cofactor is thiamine diphosphate.

It carries out the reaction isochorismate + 2-oxoglutarate + H(+) = 5-enolpyruvoyl-6-hydroxy-2-succinyl-cyclohex-3-ene-1-carboxylate + CO2. It functions in the pathway quinol/quinone metabolism; 1,4-dihydroxy-2-naphthoate biosynthesis; 1,4-dihydroxy-2-naphthoate from chorismate: step 2/7. The protein operates within quinol/quinone metabolism; menaquinone biosynthesis. Catalyzes the thiamine diphosphate-dependent decarboxylation of 2-oxoglutarate and the subsequent addition of the resulting succinic semialdehyde-thiamine pyrophosphate anion to isochorismate to yield 2-succinyl-5-enolpyruvyl-6-hydroxy-3-cyclohexene-1-carboxylate (SEPHCHC). This chain is 2-succinyl-5-enolpyruvyl-6-hydroxy-3-cyclohexene-1-carboxylate synthase, found in Haemophilus ducreyi (strain 35000HP / ATCC 700724).